The primary structure comprises 514 residues: Type-2 serine--tRNA ligase (514 aa).

L-serine is bound at residue Ala313. A Zn(2+)-binding site is contributed by Cys315. Arg344 lines the L-serine pocket. ATP-binding positions include 344-346 (RWE) and 355-356 (RV). Residue 361 to 363 (RGE) coordinates L-serine. Zn(2+) contacts are provided by Glu363 and Cys470. ATP is bound at residue Arg477.

The protein belongs to the class-II aminoacyl-tRNA synthetase family. Type-2 seryl-tRNA synthetase subfamily. Homodimer. Zn(2+) is required as a cofactor.

It is found in the cytoplasm. The catalysed reaction is tRNA(Ser) + L-serine + ATP = L-seryl-tRNA(Ser) + AMP + diphosphate + H(+). The enzyme catalyses tRNA(Sec) + L-serine + ATP = L-seryl-tRNA(Sec) + AMP + diphosphate + H(+). The protein operates within aminoacyl-tRNA biosynthesis; selenocysteinyl-tRNA(Sec) biosynthesis; L-seryl-tRNA(Sec) from L-serine and tRNA(Sec): step 1/1. Its function is as follows. Catalyzes the attachment of serine to tRNA(Ser). Is also able to aminoacylate tRNA(Sec) with serine, to form the misacylated tRNA L-seryl-tRNA(Sec), which will be further converted into selenocysteinyl-tRNA(Sec). This Methanococcus maripaludis (strain C7 / ATCC BAA-1331) protein is Type-2 serine--tRNA ligase.